The primary structure comprises 699 residues: Fervidolysin (699 aa).

The N-terminal stretch at 1–21 (MRKVLLIASIVALILALFSCA) is a signal peptide. Residues 22–149 (NPSFEPRSKA…MYKIRKPGLN (128 aa)) constitute a propeptide that is removed on maturation. Glutamate 157 contributes to the Ca(2+) binding site. The region spanning 163 to 465 (LWGLEAIGVT…YGLVKLDAAL (303 aa)) is the Peptidase S8 domain. Aspartate 190 acts as the Charge relay system in catalysis. Aspartate 199 serves as a coordination point for Ca(2+). The active-site Charge relay system is the histidine 228. Ca(2+) is bound by residues lysine 239, aspartate 241, lysine 243, and isoleucine 245. The active-site Charge relay system is serine 409.

This sequence belongs to the peptidase S8 family. In terms of processing, undergoes auto-proteolytic processing. Once cleaved, the propeptide can remain associated with the protease and blocks its activity. The physiological activation of fervidolysin is proposed to be achieved through the stepwise removal of the propeptide accomplished by several proteolytic cleavages that may not be autolytic.

The protein resides in the cell surface. Is inhibited by phenylmethylsulfonyl fluoride and 3,4-dichloroisocoumarin. EDTA and iodoacetate (1 to 5 mM) have only little effect on the enzyme activity. Functionally, protease able to degrade keratin into peptides. Is responsible for keratinolysis by F.pennivorans, which allows this bacterium to grow on native feathers. This is Fervidolysin from Fervidobacterium pennivorans.